The following is a 577-amino-acid chain: Urease subunit alpha (577 aa).

Positions 136-577 (GGIDCHVHFI…LPMAQRYFLF (442 aa)) constitute a Urease domain. Positions 141, 143, and 224 each coordinate Ni(2+). An N6-carboxylysine modification is found at lysine 224. Histidine 226 serves as a coordination point for substrate. Residues histidine 253 and histidine 279 each contribute to the Ni(2+) site. Residue histidine 327 is the Proton donor of the active site. Aspartate 367 lines the Ni(2+) pocket.

This sequence belongs to the metallo-dependent hydrolases superfamily. Urease alpha subunit family. Heterotrimer of UreA (gamma), UreB (beta) and UreC (alpha) subunits. Three heterotrimers associate to form the active enzyme. The cofactor is Ni cation. Post-translationally, carboxylation allows a single lysine to coordinate two nickel ions.

The protein resides in the cytoplasm. It catalyses the reaction urea + 2 H2O + H(+) = hydrogencarbonate + 2 NH4(+). It participates in nitrogen metabolism; urea degradation; CO(2) and NH(3) from urea (urease route): step 1/1. The polypeptide is Urease subunit alpha (Mycobacteroides abscessus (strain ATCC 19977 / DSM 44196 / CCUG 20993 / CIP 104536 / JCM 13569 / NCTC 13031 / TMC 1543 / L948) (Mycobacterium abscessus)).